The following is a 181-amino-acid chain: ATP synthase subunit delta (181 aa).

This sequence belongs to the ATPase delta chain family. As to quaternary structure, F-type ATPases have 2 components, F(1) - the catalytic core - and F(0) - the membrane proton channel. F(1) has five subunits: alpha(3), beta(3), gamma(1), delta(1), epsilon(1). F(0) has three main subunits: a(1), b(2) and c(10-14). The alpha and beta chains form an alternating ring which encloses part of the gamma chain. F(1) is attached to F(0) by a central stalk formed by the gamma and epsilon chains, while a peripheral stalk is formed by the delta and b chains.

It is found in the cell inner membrane. Functionally, f(1)F(0) ATP synthase produces ATP from ADP in the presence of a proton or sodium gradient. F-type ATPases consist of two structural domains, F(1) containing the extramembraneous catalytic core and F(0) containing the membrane proton channel, linked together by a central stalk and a peripheral stalk. During catalysis, ATP synthesis in the catalytic domain of F(1) is coupled via a rotary mechanism of the central stalk subunits to proton translocation. This protein is part of the stalk that links CF(0) to CF(1). It either transmits conformational changes from CF(0) to CF(1) or is implicated in proton conduction. In Orientia tsutsugamushi (strain Boryong) (Rickettsia tsutsugamushi), this protein is ATP synthase subunit delta.